Consider the following 334-residue polypeptide: S-adenosylmethionine decarboxylase proenzyme (334 aa).

Phe-7 is a binding site for substrate. Active-site residues include Glu-8 and Glu-11. Glu-67 is a substrate binding site. Ser-68 serves as the catalytic Schiff-base intermediate with substrate; via pyruvic acid. Ser-68 bears the Pyruvic acid (Ser); by autocatalysis mark. The active-site Proton donor; for catalytic activity is Cys-82. Substrate is bound at residue Phe-223. Active-site proton acceptor; for processing activity residues include Ser-229 and His-243. Position 247 (Glu-247) interacts with substrate. Phosphoserine is present on Ser-298.

The protein belongs to the eukaryotic AdoMetDC family. Heterotetramer of two alpha and two beta chains. It depends on pyruvate as a cofactor. Is synthesized initially as an inactive proenzyme. Formation of the active enzyme involves a self-maturation process in which the active site pyruvoyl group is generated from an internal serine residue via an autocatalytic post-translational modification. Two non-identical subunits are generated from the proenzyme in this reaction, and the pyruvate is formed at the N-terminus of the alpha chain, which is derived from the carboxyl end of the proenzyme. The post-translation cleavage follows an unusual pathway, termed non-hydrolytic serinolysis, in which the side chain hydroxyl group of the serine supplies its oxygen atom to form the C-terminus of the beta chain, while the remainder of the serine residue undergoes an oxidative deamination to produce ammonia and the pyruvoyl group blocking the N-terminus of the alpha chain.

The enzyme catalyses S-adenosyl-L-methionine + H(+) = S-adenosyl 3-(methylsulfanyl)propylamine + CO2. It participates in amine and polyamine biosynthesis; S-adenosylmethioninamine biosynthesis; S-adenosylmethioninamine from S-adenosyl-L-methionine: step 1/1. Functionally, essential for biosynthesis of the polyamines spermidine and spermine. Promotes maintenance and self-renewal of embryonic stem cells, by maintaining spermine levels. The sequence is that of S-adenosylmethionine decarboxylase proenzyme (AMD1) from Mesocricetus auratus (Golden hamster).